Consider the following 502-residue polypeptide: Glycogen synthase (502 aa).

Residue lysine 24 coordinates ADP-alpha-D-glucose.

The protein belongs to the glycosyltransferase 1 family. Bacterial/plant glycogen synthase subfamily.

The catalysed reaction is [(1-&gt;4)-alpha-D-glucosyl](n) + ADP-alpha-D-glucose = [(1-&gt;4)-alpha-D-glucosyl](n+1) + ADP + H(+). It functions in the pathway glycan biosynthesis; glycogen biosynthesis. Its function is as follows. Synthesizes alpha-1,4-glucan chains using ADP-glucose. This chain is Glycogen synthase, found in Nitrosomonas eutropha (strain DSM 101675 / C91 / Nm57).